The chain runs to 144 residues: Eukaryotic translation initiation factor 1A (144 aa).

A compositionally biased stretch (basic residues) spans 1 to 15; the sequence is MPKNKGKGGKNRKRG. 2 disordered regions span residues 1–25 and 120–144; these read MPKN…DKRE and DVDG…IDKI. Basic and acidic residues predominate over residues 16–25; it reads KNEADDDKRE. The region spanning 22–96 is the S1-like domain; sequence DKRELVFKED…DKADVILKYM (75 aa).

The protein belongs to the eIF-1A family.

Functionally, seems to be required for maximal rate of protein biosynthesis. Enhances ribosome dissociation into subunits and stabilizes the binding of the initiator Met-tRNA(I) to 40 S ribosomal subunits. This Triticum aestivum (Wheat) protein is Eukaryotic translation initiation factor 1A.